A 446-amino-acid chain; its full sequence is 4-aminobutyrate aminotransferase (446 aa).

K291 bears the N6-(pyridoxal phosphate)lysine mark.

Belongs to the class-III pyridoxal-phosphate-dependent aminotransferase family. The cofactor is pyridoxal 5'-phosphate.

The catalysed reaction is 4-aminobutanoate + 2-oxoglutarate = succinate semialdehyde + L-glutamate. It catalyses the reaction (S)-3-amino-2-methylpropanoate + 2-oxoglutarate = 2-methyl-3-oxopropanoate + L-glutamate. It functions in the pathway amino-acid degradation; 4-aminobutanoate degradation. This chain is 4-aminobutyrate aminotransferase (gabT), found in Mycobacterium leprae (strain TN).